The chain runs to 259 residues: Secretion system apparatus protein SsaT (259 aa).

6 helical membrane passes run 9–29 (LIAL…LPLL), 35–55 (GAAL…LPII), 78–98 (VIIG…VDMA), 127–147 (LLFS…EFIL), 185–205 (ISFS…LGLL), and 214–234 (VFFF…LISF).

It belongs to the FliR/MopE/SpaR family.

It localises to the cell membrane. Part of a type III secretion system. The sequence is that of Secretion system apparatus protein SsaT (ssaT) from Salmonella typhimurium (strain LT2 / SGSC1412 / ATCC 700720).